A 382-amino-acid chain; its full sequence is Exostosin-1 homolog (382 aa).

An N-terminal signal peptide occupies residues 1 to 20; the sequence is MQNVMKFHLVIFMLFGSVRL. Asn268 carries N-linked (GlcNAc...) asparagine glycosylation.

The protein belongs to the glycosyltransferase 47 family. In terms of assembly, interacts with rib-2.

The protein resides in the endoplasmic reticulum. It localises to the golgi apparatus. Required for the biosynthesis of heparan sulfate by positively regulating N-acetylglucosamine transferase II (GlcNAcT-II) and glucuronyl transferase II (GlcAT-II) activities of glycosyltransferase rib-2. Probably not directly involved in chondroitin sulfate biosynthesis but negatively regulates chondroitin sulfate levels. Maternally required for normal ventral epidermal enclosure and for embryo elongation during the early stages of embryonic development. In addition, involved in the elongation of the pharyngeal isthmus and in the organization of the actin cytoskeleton in the pharyngeal muscles during the later stages embryonic development. In adults, regulates egg-laying and the normal morphogenesis of the vulva. Also involved in the directed migration of hermaphrodite-specific neurons. This Caenorhabditis elegans protein is Exostosin-1 homolog (rib-1).